We begin with the raw amino-acid sequence, 228 residues long: 7-cyano-7-deazaguanine synthase (228 aa).

Position 9–19 (9–19 (LSGGPDSTTVL)) interacts with ATP. Zn(2+) is bound by residues C193, C203, C206, and C209.

It belongs to the QueC family. Requires Zn(2+) as cofactor.

The catalysed reaction is 7-carboxy-7-deazaguanine + NH4(+) + ATP = 7-cyano-7-deazaguanine + ADP + phosphate + H2O + H(+). Its pathway is purine metabolism; 7-cyano-7-deazaguanine biosynthesis. In terms of biological role, catalyzes the ATP-dependent conversion of 7-carboxy-7-deazaguanine (CDG) to 7-cyano-7-deazaguanine (preQ(0)). This is 7-cyano-7-deazaguanine synthase from Rickettsia massiliae (strain Mtu5).